Reading from the N-terminus, the 755-residue chain is Leucine-rich repeat-containing protein 36 (755 aa).

LRR repeat units lie at residues 51–72 (SLRS…QYLC) and 73–94 (SLQE…SRLQ). An LRRCT domain is found at 107-146 (NPVVRKDTDYRLFAVYTLQTLEKLDDRAVRDSERRAAKLH). 2 disordered regions span residues 354–374 (GKNY…TTSH) and 448–517 (LPPG…PPIS). Basic and acidic residues predominate over residues 356–370 (NYREHSIKPSQDKKA). The span at 498-510 (LSSDLGSLHGLSG) shows a compositional bias: low complexity. Positions 601–671 (VESLKQKLVK…ELTQLKRLEE (71 aa)) form a coiled coil. The disordered stretch occupies residues 701–755 (YSGKSLLPPEKSHPLGRSSPFGKSTLSSSSPMVHDTGQYLIQSVSEADPEPSLWS). A compositionally biased stretch (polar residues) spans 721 to 731 (FGKSTLSSSSP).

The sequence is that of Leucine-rich repeat-containing protein 36 (Lrrc36) from Mus musculus (Mouse).